A 520-amino-acid chain; its full sequence is Ribonuclease Y (520 aa).

Residues 3 to 23 (IELAIIFIVLAAGAGFLIGNL) form a helical membrane-spanning segment. Residues 210 to 273 (TVSVVALPSD…EVAKIALEKL (64 aa)) enclose the KH domain. Residues 336–429 (VYQHSLEVAF…VQAADALSGA (94 aa)) enclose the HD domain.

It belongs to the RNase Y family.

Its subcellular location is the cell membrane. Its function is as follows. Endoribonuclease that initiates mRNA decay. This chain is Ribonuclease Y, found in Geobacter sulfurreducens (strain ATCC 51573 / DSM 12127 / PCA).